Consider the following 141-residue polypeptide: Nucleoside diphosphate kinase (141 aa).

ATP contacts are provided by Lys-11, Phe-59, Arg-87, Thr-93, Arg-104, and Asn-114. The active-site Pros-phosphohistidine intermediate is the His-117.

The protein belongs to the NDK family. As to quaternary structure, homotetramer. Requires Mg(2+) as cofactor.

Its subcellular location is the cytoplasm. The catalysed reaction is a 2'-deoxyribonucleoside 5'-diphosphate + ATP = a 2'-deoxyribonucleoside 5'-triphosphate + ADP. The enzyme catalyses a ribonucleoside 5'-diphosphate + ATP = a ribonucleoside 5'-triphosphate + ADP. Functionally, major role in the synthesis of nucleoside triphosphates other than ATP. The ATP gamma phosphate is transferred to the NDP beta phosphate via a ping-pong mechanism, using a phosphorylated active-site intermediate. The sequence is that of Nucleoside diphosphate kinase from Alkalilimnicola ehrlichii (strain ATCC BAA-1101 / DSM 17681 / MLHE-1).